The following is a 154-amino-acid chain: Myoglobin (154 aa).

The 147-residue stretch at 2 to 148 folds into the Globin domain; that stretch reads GLSDGEWQLV…FRNDIAAKYK (147 aa). Residue S4 is modified to Phosphoserine. H65 is a nitrite binding site. H65 contacts O2. Position 68 is a phosphothreonine (T68). Position 94 (H94) interacts with heme b.

It belongs to the globin family. Monomeric.

The protein localises to the cytoplasm. It is found in the sarcoplasm. The enzyme catalyses Fe(III)-heme b-[protein] + nitric oxide + H2O = Fe(II)-heme b-[protein] + nitrite + 2 H(+). The catalysed reaction is H2O2 + AH2 = A + 2 H2O. In terms of biological role, monomeric heme protein which primary function is to store oxygen and facilitate its diffusion within muscle tissues. Reversibly binds oxygen through a pentacoordinated heme iron and enables its timely and efficient release as needed during periods of heightened demand. Depending on the oxidative conditions of tissues and cells, and in addition to its ability to bind oxygen, it also has a nitrite reductase activity whereby it regulates the production of bioactive nitric oxide. Under stress conditions, like hypoxia and anoxia, it also protects cells against reactive oxygen species thanks to its pseudoperoxidase activity. The protein is Myoglobin (MB) of Tupaia glis (Common tree shrew).